The chain runs to 385 residues: 26S proteasome non-ATPase regulatory subunit 13 (385 aa).

Residues 176–347 form the PCI domain; the sequence is EFYKNALMYL…EIIHITWVTP (172 aa).

Belongs to the proteasome subunit S11 family.

In terms of biological role, acts as a regulatory subunit of the 26S proteasome which is involved in the ATP-dependent degradation of ubiquitinated proteins. In Dictyostelium discoideum (Social amoeba), this protein is 26S proteasome non-ATPase regulatory subunit 13 (psmD13).